The primary structure comprises 394 residues: Elongation factor Tu (394 aa).

The 195-residue stretch at 10-204 (KPHVNVGTIG…ALDTYIPEPE (195 aa)) folds into the tr-type G domain. The interval 19–26 (GHVDHGKT) is G1. Residue 19–26 (GHVDHGKT) coordinates GTP. Thr26 is a binding site for Mg(2+). Positions 60–64 (GITIN) are G2. Residues 81 to 84 (DCPG) are G3. Residues 81–85 (DCPGH) and 136–139 (NKCD) contribute to the GTP site. A G4 region spans residues 136–139 (NKCD). Residues 174–176 (SAL) are G5.

The protein belongs to the TRAFAC class translation factor GTPase superfamily. Classic translation factor GTPase family. EF-Tu/EF-1A subfamily. As to quaternary structure, monomer.

The protein resides in the cytoplasm. It carries out the reaction GTP + H2O = GDP + phosphate + H(+). Functionally, GTP hydrolase that promotes the GTP-dependent binding of aminoacyl-tRNA to the A-site of ribosomes during protein biosynthesis. The polypeptide is Elongation factor Tu (Colwellia psychrerythraea (strain 34H / ATCC BAA-681) (Vibrio psychroerythus)).